A 28-amino-acid polypeptide reads, in one-letter code: Dermaseptin-SP1 (28 aa).

As to expression, expressed by the skin glands.

The protein resides in the secreted. In terms of biological role, probable antimicrobial peptide which stimulates insulin-release in glucose-responsive BRIN-BD 11 cells. This Agalychnis spurrelli (Gliding leaf frog) protein is Dermaseptin-SP1.